Here is a 674-residue protein sequence, read N- to C-terminus: DNA ligase (674 aa).

NAD(+) is bound by residues 34 to 38, 82 to 83, and Glu107; these read DADFD and SL. The active-site N6-AMP-lysine intermediate is Lys109. NAD(+)-binding residues include Arg130, Glu170, Lys286, and Lys310. Residues Cys404, Cys407, Cys423, and Cys429 each coordinate Zn(2+). The region spanning 593–674 is the BRCT domain; it reads KPAQTLEGIT…FTRLLETGEA (82 aa).

Belongs to the NAD-dependent DNA ligase family. LigA subfamily. Requires Mg(2+) as cofactor. Mn(2+) is required as a cofactor.

It catalyses the reaction NAD(+) + (deoxyribonucleotide)n-3'-hydroxyl + 5'-phospho-(deoxyribonucleotide)m = (deoxyribonucleotide)n+m + AMP + beta-nicotinamide D-nucleotide.. DNA ligase that catalyzes the formation of phosphodiester linkages between 5'-phosphoryl and 3'-hydroxyl groups in double-stranded DNA using NAD as a coenzyme and as the energy source for the reaction. It is essential for DNA replication and repair of damaged DNA. In Corynebacterium aurimucosum (strain ATCC 700975 / DSM 44827 / CIP 107346 / CN-1) (Corynebacterium nigricans), this protein is DNA ligase.